Reading from the N-terminus, the 229-residue chain is Platelet-activating factor acetylhydrolase IB subunit alpha2 (229 aa).

Ser-2 carries the N-acetylserine modification. Position 2 is a phosphoserine (Ser-2). Residue Ser-48 is part of the active site. Ser-64 is modified (phosphoserine). Residues Asp-193 and His-196 contribute to the active site. A Phosphothreonine modification is found at Thr-220.

The protein belongs to the 'GDSL' lipolytic enzyme family. Platelet-activating factor acetylhydrolase IB beta/gamma subunits subfamily. As to quaternary structure, forms a catalytic dimer which is either homodimer (alpha2/alpha2 homodimer) or heterodimer with PAFAH1B3 (alpha2/alpha1 heterodimer). Component of the cytosolic (PAF-AH (I)) heterotetrameric enzyme, which is composed of PAFAH1B1 (beta), PAFAH1B2 (alpha2) and PAFAH1B3 (alpha1) subunits. The catalytic activity of the enzyme resides in the alpha1 (PAFAH1B3) and alpha2 (PAFAH1B2) subunits, whereas the beta subunit (PAFAH1B1) has regulatory activity. Trimer formation is not essential for the catalytic activity. Interacts (homodimer form) with PAFAH1B1 (homodimer form); PAFAH1B2 competes with NDEL1 for PAFAH1B1 binding. Interacts with VLDLR; this interaction may modulate the Reelin pathway.

It localises to the cytoplasm. It carries out the reaction a 1-O-alkyl-2-acetyl-sn-glycero-3-phosphocholine + H2O = a 1-O-alkyl-sn-glycero-3-phosphocholine + acetate + H(+). It catalyses the reaction 1-O-hexadecyl-2-acetyl-sn-glycero-3-phosphocholine + H2O = 1-O-hexadecyl-sn-glycero-3-phosphocholine + acetate + H(+). The enzyme catalyses 1-O-hexadecyl-2-acetyl-sn-glycero-3-phosphate + H2O = 1-O-hexadecyl-sn-glycero-3-phosphate + acetate + H(+). The catalysed reaction is 1-O-hexadecyl-2-acetyl-sn-glycero-3-phosphoethanolamine + H2O = 1-O-hexadecyl-sn-glycero-3-phosphoethanolamine + acetate + H(+). With respect to regulation, beta subunit (PAFAH1B1) stimulates the acetylhydrolase activity of the alpha2/alpha2 catalytic homodimer. Alpha2 catalytic subunit of the cytosolic type I platelet-activating factor (PAF) acetylhydrolase (PAF-AH (I)) heterotetrameric enzyme that catalyzes the hydrolyze of the acetyl group at the sn-2 position of PAF and its analogs and modulates the action of PAF. The activity and substrate specificity of PAF-AH (I) are affected by its subunit composition. The alpha2/alpha2 homodimer (PAFAH1B2/PAFAH1B2 homodimer) hydrolyzes PAF and 1-O-alkyl-2-acetyl-sn-glycero-3-phosphorylethanolamine (AAGPE) more efficiently than 1-O-alkyl-2-acetyl-sn-glycero-3-phosphoric acid (AAGPA). In contrast, the alpha1/alpha2 heterodimer(PAFAH1B3/PAFAH1B3 heterodimer) hydrolyzes AAGPA more efficiently than PAF, but has little hydrolytic activity towards AAGPE. May play a role in male germ cell meiosis during the late pachytenestage and meiotic divisions as well as early spermiogenesis. This is Platelet-activating factor acetylhydrolase IB subunit alpha2 from Pongo abelii (Sumatran orangutan).